The primary structure comprises 84 residues: UPF0153 protein YeiW (84 aa).

Belongs to the UPF0153 family.

This is UPF0153 protein YeiW (yeiW) from Escherichia coli (strain K12).